Reading from the N-terminus, the 506-residue chain is Protoheme IX farnesyltransferase, mitochondrial (506 aa).

Residues 1–42 (MILRSSLGRLGVARESPLCLQCLNRSRPSFPAVNKLASISRL) constitute a mitochondrion transit peptide. Over residues 45-61 (TVAGQSPSSSVNKTYFS) the composition is skewed to polar residues. The tract at residues 45–131 (TVAGQSPSSS…AEPVIPPDAS (87 aa)) is disordered. A compositionally biased stretch (low complexity) spans 73–88 (PSLFTSLSPSNSPSQL). Residues 89–100 (NRGHSTPSTSPE) show a composition bias toward polar residues. The next 8 helical transmembrane spans lie at 163–183 (FLVL…SILA), 199–221 (LTFL…LNMI), 247–267 (AAVF…YFGT), 269–289 (PTVT…YTPL), 297–317 (TWIG…AAAG), 337–357 (LGGW…FNAL), 390–410 (VLMF…HGFL), and 439–459 (GLFW…LVTK).

Belongs to the UbiA prenyltransferase family.

It localises to the mitochondrion membrane. It catalyses the reaction heme b + (2E,6E)-farnesyl diphosphate + H2O = Fe(II)-heme o + diphosphate. Its function is as follows. Converts protoheme IX and farnesyl diphosphate to heme O. This chain is Protoheme IX farnesyltransferase, mitochondrial (cox10), found in Emericella nidulans (strain FGSC A4 / ATCC 38163 / CBS 112.46 / NRRL 194 / M139) (Aspergillus nidulans).